A 185-amino-acid polypeptide reads, in one-letter code: Photosystem I assembly protein Ycf4 (185 aa).

A run of 2 helical transmembrane segments spans residues 21–43 (NFFW…ASSY) and 63–85 (GVVM…CTIL).

It belongs to the Ycf4 family.

It is found in the plastid. The protein resides in the chloroplast thylakoid membrane. Its function is as follows. Seems to be required for the assembly of the photosystem I complex. This Saccharum hybrid (Sugarcane) protein is Photosystem I assembly protein Ycf4.